A 124-amino-acid polypeptide reads, in one-letter code: Large ribosomal subunit protein eL22z (124 aa).

The protein belongs to the eukaryotic ribosomal protein eL22 family.

This Arabidopsis thaliana (Mouse-ear cress) protein is Large ribosomal subunit protein eL22z (RPL22B).